The following is an 835-amino-acid chain: Telomere length regulation protein TEL2 homolog (835 aa).

Disordered regions lie at residues 455 to 501 (SADC…LAPY) and 629 to 648 (LSHE…HSIR). A compositionally biased stretch (low complexity) spans 464–473 (ESSPSKSCPK). The span at 474–486 (AIEKSKMEAKADQ) shows a compositional bias: basic and acidic residues. Residues 488–499 (SDSELDSDDDLA) are compositionally biased toward acidic residues. Residues 636-648 (ESRSTGTGQHSIR) are compositionally biased toward polar residues.

The protein belongs to the TEL2 family.

The protein resides in the cytoplasm. Its subcellular location is the membrane. It localises to the nucleus. The protein localises to the chromosome. It is found in the telomere. Regulator of the DNA damage response (DDR). Part of the TTT complex that is required to stabilize protein levels of the phosphatidylinositol 3-kinase-related protein kinase (PIKK) family proteins. Promotes assembly, stabilizes and maintains the activity of TORC complexes, which regulate cell growth and survival in response to nutrient and hormonal signals. May be involved in telomere length regulation. This Xenopus laevis (African clawed frog) protein is Telomere length regulation protein TEL2 homolog (telo2).